A 399-amino-acid chain; its full sequence is Large envelope protein (399 aa).

M1 is modified (N-acetylmethionine). G2 is lipidated: N-myristoyl glycine; by host. Positions 2–118 (GLSWTVPLEW…PPLRDTHPQA (117 aa)) are pre-S1. The segment at 2–173 (GLSWTVPLEW…FSRIGDPAPN (172 aa)) is pre-S. Topologically, residues 2 to 180 (GLSWTVPLEW…APNMESITSG (179 aa)) are virion surface; in external conformation. Residues 2–252 (GLSWTVPLEW…PGYRWMCLRR (251 aa)) are Intravirion; in internal conformation-facing. A glycan (N-linked (GlcNAc...) asparagine) is linked at S4. The tract at residues 85-110 (KTLPADPPPASTNRQSGRQPTPITPP) is disordered. Positions 95–105 (STNRQSGRQPT) are enriched in polar residues. The interval 119-173 (MQWNSTTFHQALQDPRVRGLYFPAGGSSSGTVNPVPTTASLISSIFSRIGDPAPN) is pre-S2. Residues 181 to 201 (FLGPLLVLQAGFFLLTKILTI) form a helical membrane-spanning segment. The Intravirion; in external conformation portion of the chain corresponds to 202 to 252 (PQSLDSWWTSLNFLGGAPVCLGQNSQSPTSNHSPTSCPPICPGYRWMCLRR). A helical transmembrane segment spans residues 253-273 (FIIFLFILLLCLIFLLVLLDY). Residues 274 to 347 (QGMLPVCPLI…WASARFSWLS (74 aa)) are Virion surface-facing. Residue N319 is glycosylated (N-linked (GlcNAc...) asparagine; by host). A helical transmembrane segment spans residues 348–368 (LLVPFVQWFAGLSPTVWLSVI). At 369–374 (WMMWYW) the chain is on the intravirion side. The helical transmembrane segment at 375–397 (GPSLYDILSPFIPLLPIFFCLWV) threads the bilayer. Over 398–399 (YI) the chain is Virion surface.

This sequence belongs to the orthohepadnavirus major surface antigen family. In its internal form (Li-HBsAg), interacts with the capsid protein and with the isoform S. Interacts with host chaperone CANX. In terms of assembly, associates with host chaperone CANX through its pre-S2 N glycan; this association may be essential for isoform M proper secretion. As to quaternary structure, interacts with isoform L. Interacts with the antigens of satellite virus HDV (HDVAgs); this interaction is required for encapsidation of HDV genomic RNA. Post-translationally, isoform M is N-terminally acetylated by host at a ratio of 90%, and N-glycosylated by host at the pre-S2 region. Myristoylated.

It is found in the virion membrane. Its function is as follows. The large envelope protein exists in two topological conformations, one which is termed 'external' or Le-HBsAg and the other 'internal' or Li-HBsAg. In its external conformation the protein attaches the virus to cell receptors and thereby initiating infection. This interaction determines the species specificity and liver tropism. This attachment induces virion internalization predominantly through caveolin-mediated endocytosis. The large envelope protein also assures fusion between virion membrane and endosomal membrane. In its internal conformation the protein plays a role in virion morphogenesis and mediates the contact with the nucleocapsid like a matrix protein. In terms of biological role, the middle envelope protein plays an important role in the budding of the virion. It is involved in the induction of budding in a nucleocapsid independent way. In this process the majority of envelope proteins bud to form subviral lipoprotein particles of 22 nm of diameter that do not contain a nucleocapsid. This Homo sapiens (Human) protein is Large envelope protein.